A 1097-amino-acid chain; its full sequence is DNA-directed RNA polymerase subunit beta (1097 aa).

The tract at residues 1072-1097 is disordered; the sequence is QDINPRRNTPSRPTYESLGTSEYEED. Residues 1077 to 1091 show a composition bias toward polar residues; that stretch reads RRNTPSRPTYESLGT.

It belongs to the RNA polymerase beta chain family. As to quaternary structure, in cyanobacteria the RNAP catalytic core is composed of 2 alpha, 1 beta, 1 beta', 1 gamma and 1 omega subunit. When a sigma factor is associated with the core the holoenzyme is formed, which can initiate transcription.

It catalyses the reaction RNA(n) + a ribonucleoside 5'-triphosphate = RNA(n+1) + diphosphate. Its function is as follows. DNA-dependent RNA polymerase catalyzes the transcription of DNA into RNA using the four ribonucleoside triphosphates as substrates. The chain is DNA-directed RNA polymerase subunit beta from Prochlorococcus marinus (strain MIT 9215).